A 157-amino-acid chain; its full sequence is Crossover junction endodeoxyribonuclease RuvC (157 aa).

Catalysis depends on residues aspartate 7, glutamate 67, and aspartate 139. Mg(2+) contacts are provided by aspartate 7, glutamate 67, and aspartate 139.

The protein belongs to the RuvC family. As to quaternary structure, homodimer which binds Holliday junction (HJ) DNA. The HJ becomes 2-fold symmetrical on binding to RuvC with unstacked arms; it has a different conformation from HJ DNA in complex with RuvA. In the full resolvosome a probable DNA-RuvA(4)-RuvB(12)-RuvC(2) complex forms which resolves the HJ. Mg(2+) serves as cofactor.

The protein localises to the cytoplasm. It carries out the reaction Endonucleolytic cleavage at a junction such as a reciprocal single-stranded crossover between two homologous DNA duplexes (Holliday junction).. The RuvA-RuvB-RuvC complex processes Holliday junction (HJ) DNA during genetic recombination and DNA repair. Endonuclease that resolves HJ intermediates. Cleaves cruciform DNA by making single-stranded nicks across the HJ at symmetrical positions within the homologous arms, yielding a 5'-phosphate and a 3'-hydroxyl group; requires a central core of homology in the junction. The consensus cleavage sequence is 5'-(A/T)TT(C/G)-3'. Cleavage occurs on the 3'-side of the TT dinucleotide at the point of strand exchange. HJ branch migration catalyzed by RuvA-RuvB allows RuvC to scan DNA until it finds its consensus sequence, where it cleaves and resolves the cruciform DNA. This Prochlorococcus marinus (strain AS9601) protein is Crossover junction endodeoxyribonuclease RuvC.